The primary structure comprises 426 residues: Selenocysteine lyase (426 aa).

Lys-239 bears the N6-(pyridoxal phosphate)lysine mark. The active-site S-selanylcysteine intermediate is Cys-367.

This sequence belongs to the class-V pyridoxal-phosphate-dependent aminotransferase family. As to quaternary structure, homodimer. Pyridoxal 5'-phosphate serves as cofactor.

The protein localises to the cytoplasm. It localises to the cytosol. It catalyses the reaction L-selenocysteine + AH2 = hydrogenselenide + L-alanine + A + H(+). Catalyzes the decomposition of L-selenocysteine to L-alanine and elemental selenium. This chain is Selenocysteine lyase (scly), found in Xenopus laevis (African clawed frog).